A 230-amino-acid chain; its full sequence is Ribosomal RNA small subunit methyltransferase G (230 aa).

S-adenosyl-L-methionine-binding positions include Gly95, Phe100, 146 to 147 (GE), and Arg159.

The protein belongs to the methyltransferase superfamily. RNA methyltransferase RsmG family.

The protein localises to the cytoplasm. Functionally, specifically methylates the N7 position of a guanine in 16S rRNA. The sequence is that of Ribosomal RNA small subunit methyltransferase G from Parabacteroides distasonis (strain ATCC 8503 / DSM 20701 / CIP 104284 / JCM 5825 / NCTC 11152).